We begin with the raw amino-acid sequence, 425 residues long: NAC transcription factor ONAC010 (425 aa).

Over residues 1–10 (MESPDSSSGS) the composition is skewed to polar residues. The tract at residues 1–34 (MESPDSSSGSAPPRVLRRQQQQPGSAPELPPGFR) is disordered. Residues 12–23 (PPRVLRRQQQQP) are compositionally biased toward low complexity. One can recognise an NAC domain in the interval 29–200 (LPPGFRFHPT…DWVLCRIYKK (172 aa)). A DNA-binding region spans residues 129–206 (VGVKKALVFY…IYKKTNKAGA (78 aa)).

It is found in the nucleus. Functionally, transcription factor of the NAC family associated with male fertility. In Oryza sativa subsp. indica (Rice), this protein is NAC transcription factor ONAC010 (ONAC010).